Reading from the N-terminus, the 103-residue chain is Protein translation factor SUI1 homolog (103 aa).

Belongs to the SUI1 family.

This is Protein translation factor SUI1 homolog from Hyperthermus butylicus (strain DSM 5456 / JCM 9403 / PLM1-5).